The primary structure comprises 465 residues: WAS protein family homolog 2 (465 aa).

A required for WASH complex assembly region spans residues 1 to 54; that stretch reads MTPVRMQHSLAGQTYAVPLIQPDLRREEAVQQMADALQYLQKVSGDIFSRISQQ. A WHD1 region spans residues 1–167; sequence MTPVRMQHSL…EGLGGLPSNI (167 aa). Lys220 participates in a covalent cross-link: Glycyl lysine isopeptide (Lys-Gly) (interchain with G-Cter in ubiquitin). Disordered stretches follow at residues 297-407 and 422-465; these read QDGV…QGGH and GISG…DWES. Residues 302–314 are compositionally biased toward pro residues; it reads TPPPPPPPPPPAP. Positions 349–465 are VCA; the sequence is QGAPREVVDP…AEEDEDDWES (117 aa). The WH2 domain maps to 361 to 383; that stretch reads GRATLLESIRQAGGIGKAKLRSM. The span at 382–398 shows a compositional bias: basic and acidic residues; that stretch reads SMKERKLEKKKQKEQEQ. Residues 424-436 show a composition bias toward gly residues; sequence SGKGPGAGEGPGG. A compositionally biased stretch (acidic residues) spans 456–465; sequence AEEDEDDWES.

It belongs to the WASH1 family. Component of the WASH core complex also described as WASH regulatory complex (SHRC) composed of WASH (WASHC1, WASH2P or WASH3P), WASHC2 (WASHC2A or WASHC2C), WASHC3, WASHC4 and WASHC5. The WASH core complex associates with the F-actin-capping protein dimer (formed by CAPZA1, CAPZA2 or CAPZA3 and CAPZB) in a transient or substoichiometric manner which was initially described as WASH complex. Interacts (via WHD1 region) with WASHC2C; the interaction is direct. Interacts with alpha-tubulin. Interacts with BECN1; WASHC1 and AMBRA1 can competitively interact with BECN1. Interacts with BLOC1S2; may associate with the BLOC-1 complex. Interacts with tubulin gamma chain (TUBG1 or TUBG2). Interacts with EXOC1, EXOC4, EXOC8; in MMP14-positive endosomes in breast tumor cells; indicative for an association with the exocyst complex.

The protein localises to the early endosome membrane. It is found in the recycling endosome membrane. Its subcellular location is the late endosome. It localises to the cytoplasmic vesicle. The protein resides in the autophagosome. The protein localises to the cytoplasm. It is found in the cytoskeleton. Its subcellular location is the microtubule organizing center. It localises to the centrosome. The protein resides in the centriole. Acts as a nucleation-promoting factor at the surface of endosomes, where it recruits and activates the Arp2/3 complex to induce actin polymerization, playing a key role in the fission of tubules that serve as transport intermediates during endosome sorting. Involved in endocytic trafficking of EGF. Involved in transferrin receptor recycling. Regulates the trafficking of endosomal alpha5beta1 integrin to the plasma membrane and involved in invasive cell migration. In T-cells involved in endosome-to-membrane recycling of receptors including T-cell receptor (TCR), CD28 and ITGAL; proposed to be implicated in T-cell proliferation and effector function. In dendritic cells involved in endosome-to-membrane recycling of major histocompatibility complex (MHC) class II probably involving retromer and subsequently allowing antigen sampling, loading and presentation during T-cell activation. Involved in Arp2/3 complex-dependent actin assembly driving Salmonella typhimurium invasion independent of ruffling. Involved in the exocytosis of MMP14 leading to matrix remodeling during invasive migration and implicating late endosome-to-plasma membrane tubular connections and cooperation with the exocyst complex. Involved in negative regulation of autophagy independently from its role in endosomal sorting by inhibiting BECN1 ubiquitination to inactivate PIK3C3/Vps34 activity. The protein is WAS protein family homolog 2 (WASH2P) of Homo sapiens (Human).